Reading from the N-terminus, the 718-residue chain is MFGKKKKKIEISGPSNFEHRVHTGFDPQEQKFTGLPQQWHSLLADTANRPKPMVDPSCITPIQLAPMKTIVRGNKSCKESSINGLLEDFDNISVTRSNSLRKESPPTPDQGAASRIQGHSEENGFITFSQYSSESDTTTDYTTEKYRDRSLYGDDLDLYYRGSHAAKQNGHAMKMKHGDAYYPEMKPLKSDLARFPVDYHTHLDSLSKASEYGDLKWDYQRASSSSPLDYSFQLTPSRTAGTSRCSKESLAYSESDWGPSFDDYDRRPKSSYLHQTSPQPAMRQRSKSGSGLQEPMMPFGASAFKTHPQGHSYNSYTYPRLSEPTMCIPKVDYDRAQMVFSPPLSGSDTYPRGPTKLPQSQSKVGYSSSSHQYPGYHKASLYHHPSLQTSSQYISTASYLSSLSISSSTYPPPSWGSSSDQQPSRVSHEQFRAALQLVVSPGDPREYLDNFIKIGEGSTGIVCIATEKHTGKQVAVKKMDLRKQQRRELLFNEVVIMRDYHHDNVVDMYNSYLVGDELWVVMEFLEGGALTDIVTHTRMNEEQIATVCLSVLKALSYLHNQGVIHRDIKSDSILLTSDGRIKLSDFGFCAQVSKEVPKRKSLVGTPYWMAPEVISRLPYGTEVDIWSLGIMVIEMIDGEPPYFNEPPLQAMRRIRDSLPPRVKDLHKVSSMLRGFLDLMLVREPSQRATAQELLGHPFLKLAGPPSCIVPLMRQYRHH.

5 disordered regions span residues 1 to 29, 96 to 119, 226 to 245, 264 to 296, and 339 to 371; these read MFGK…DPQE, RSNS…IQGH, SPLD…TSRC, YDRR…QEPM, and VFSP…SSSH. Positions 11–24 constitute a CRIB domain; sequence ISGPSNFEHRVHTG. The interval 25–447 is linker; that stretch reads FDPQEQKFTG…VVSPGDPREY (423 aa). Serine 104 is subject to Phosphoserine. Position 107 is a phosphothreonine (threonine 107). The segment covering 226-244 has biased composition (polar residues); the sequence is SPLDYSFQLTPSRTAGTSR. A compositionally biased stretch (low complexity) spans 359–371; it reads QSQSKVGYSSSSH. The Protein kinase domain occupies 448–699; sequence LDNFIKIGEG…AQELLGHPFL (252 aa). ATP is bound by residues 454–462 and lysine 477; that span reads IGEGSTGIV. The Proton acceptor role is filled by aspartate 567.

The protein belongs to the protein kinase superfamily. STE Ser/Thr protein kinase family. STE20 subfamily. Interacts tightly with GTP-bound but not GDP-bound CDC42/p21 and RAC1. Interacts with MARK2, leading to inhibit MARK2 independently of kinase activity. Interacts with RHOD and RHOH. In terms of processing, autophosphorylated when activated by CDC42/p21.

Its subcellular location is the mitochondrion. The protein resides in the cytoplasm. It localises to the nucleus. It carries out the reaction L-seryl-[protein] + ATP = O-phospho-L-seryl-[protein] + ADP + H(+). It catalyses the reaction L-threonyl-[protein] + ATP = O-phospho-L-threonyl-[protein] + ADP + H(+). Functionally, serine/threonine protein kinase that plays a role in a variety of different signaling pathways including cytoskeleton regulation, cell migration, proliferation or cell survival. Activation by various effectors including growth factor receptors or active CDC42 and RAC1 results in a conformational change and a subsequent autophosphorylation on several serine and/or threonine residues. Phosphorylates the proto-oncogene RAF and stimulates its kinase activity. Promotes cell survival by phosphorylating the BCL2 antagonist of cell death BAD. Phosphorylates CTNND1, probably to regulate cytoskeletal organization and cell morphology. Keeps microtubules stable through MARK2 inhibition and destabilizes the F-actin network leading to the disappearance of stress fibers and focal adhesions. The polypeptide is Serine/threonine-protein kinase PAK 5 (Pak5) (Rattus norvegicus (Rat)).